Reading from the N-terminus, the 344-residue chain is MKFVNHIEPVAPRRAGGAVAEVYAEARREFGRLPEPLAMLSPDEGLLTAGWATLRETLLVGQVPRGRKEAVAAAVAASLRCPWCVDAHTTMLYAAGQTDTAAAILAGTAPAAGDPNAPYVAWAAGTGTPAGPPAPFGPDVAAEYLGTAVQFHFIARLVLVLLDETFLPGGPRAQQLMRRAGGLVFARKVRAEHRPGRSTRRLEPRTLPDDLAWATPSEPIATAFAALSHHLDTAPHLPPPTRQVVRRVVGSWHGEPMPMSSRWTNEHTAELPADLHAPTRLALLTGLAPHQVTDDDVAAARSLLDTDAALVGALAWAAFTAARRIGTWIGAAAEGQVSRQNPTG.

The tract at residues 49–50 (AG) is important for interaction with PknI. Cys-84 (cysteine sulfenic acid (-SOH) intermediate) is an active-site residue.

Belongs to the AhpD family. In terms of assembly, interacts with the serine/threonine-protein kinase PknI. The PknI-Rv2159c interaction is mediated through phosphorylation independent physical interaction.

Its activity is regulated as follows. Interaction with PknI increases the peroxidase activity by several folds. In terms of biological role, involved in protection against oxidative stresses. May play a significant role in maintaining the cellular homeostasis during stress and virulence of M.tuberculosis. In vitro, catalyzes the decomposition of cumene hydroperoxide (CHP) to acetophenone. The polypeptide is Alkyl hydroperoxide reductase Rv2159c (Mycobacterium tuberculosis (strain ATCC 25618 / H37Rv)).